Reading from the N-terminus, the 315-residue chain is MAESLMDIKRRIASTKKTGQITSAMQMVSGAKLSQIEKNSVAYQVYTDKIREIVTHLAASQLIDIARQKSSLQAEPADSTIKKAIKHEVTLSNLLVERPIKKTGYLVITSDRGLVGAYNSSILKAMVQMISETHQSPDEYAILAVGGTGADFFKARGMNLTYEYRGVSDVPSFEEVKQIIKTAVAMYDNGVYDELYVCYNHHVNSLTSGFRAEKMLPITDLDVSEVADQNLEYITEPSVDDALDAILPQYAESLIYGAMLDSKTAEHAASMAAMKSATDNANNLISELSIKYNRARQAQITTEITEIVGGAAALE.

Belongs to the ATPase gamma chain family. F-type ATPases have 2 components, CF(1) - the catalytic core - and CF(0) - the membrane proton channel. CF(1) has five subunits: alpha(3), beta(3), gamma(1), delta(1), epsilon(1). CF(0) has three main subunits: a, b and c.

It is found in the cell membrane. Functionally, produces ATP from ADP in the presence of a proton gradient across the membrane. The gamma chain is believed to be important in regulating ATPase activity and the flow of protons through the CF(0) complex. The polypeptide is ATP synthase gamma chain (Latilactobacillus sakei subsp. sakei (strain 23K) (Lactobacillus sakei subsp. sakei)).